The chain runs to 134 residues: Transcription antitermination protein NusB (134 aa).

It belongs to the NusB family.

Functionally, involved in transcription antitermination. Required for transcription of ribosomal RNA (rRNA) genes. Binds specifically to the boxA antiterminator sequence of the ribosomal RNA (rrn) operons. This Shewanella sp. (strain W3-18-1) protein is Transcription antitermination protein NusB.